Reading from the N-terminus, the 354-residue chain is MREFCTKWWKRIATVDMLFIGVLTLLASLFASWLKQFPGFSLFGALIIALLIGMIIQFPIRSAYVGSNDGRKAGVKDAAGLISNKLLRLGIILLGFKLNLAVLFTQGIKCLPIAAVVVTLTIIVCYAIARKLGVDPMLAILTAGGTGICGAAAVMGLAGSIKVPEDKQDEKDNDVTMAVAIVAIMGTVFALLEIALGPLTGMTKDQLGITAGASLHEIAHAVAGGDAFGAVDIATIMKLSRVLMLVFAAIIIAIWWEKKHSEVQSTGKKTVAFPWFMLGFIGASIIGTFVPFVTSITPQLVDFAYIVLGMAMAALGINVNFKAIASKGKKPMLASFLTSILLMCFAAGVAMLFF.

Helical transmembrane passes span 12-33 (IATVDMLFIGVLTLLASLFASW), 43-65 (FGALIIALLIGMIIQFPIRSAYV), 86-108 (LLRLGIILLGFKLNLAVLFTQGI), 112-129 (PIAAVVVTLTIIVCYAIA), 138-160 (LAILTAGGTGICGAAAVMGLAGS), 175-197 (VTMAVAIVAIMGTVFALLEIALG), 239-256 (LSRVLMLVFAAIIIAIWW), 271-293 (VAFPWFMLGFIGASIIGTFVPFV), 300-321 (LVDFAYIVLGMAMAALGINVNF), and 331-353 (PMLASFLTSILLMCFAAGVAMLF).

Belongs to the UPF0324 family.

It is found in the cell membrane. In Bifidobacterium longum (strain NCC 2705), this protein is UPF0324 membrane protein BL1094.